The primary structure comprises 534 residues: 26S proteasome non-ATPase regulatory subunit 3 (534 aa).

The segment covering 1–16 (MKQEGSARRRGADKAK) has biased composition (basic and acidic residues). The tract at residues 1 to 69 (MKQEGSARRR…AEHSQRELDT (69 aa)) is disordered. A compositionally biased stretch (pro residues) spans 17 to 32 (PPPGGGEQEPPPPPAP). A Glycyl lysine isopeptide (Lys-Gly) (interchain with G-Cter in SUMO1); alternate cross-link involves residue Lys38. Residue Lys38 forms a Glycyl lysine isopeptide (Lys-Gly) (interchain with G-Cter in SUMO2); alternate linkage. Residues 286–465 (ARYLYYTGRI…GYVQSKEMID (180 aa)) enclose the PCI domain. Phosphoserine occurs at positions 418 and 430. A disordered region spans residues 500-534 (SYNKDLESAEERREREQQDLEFAKEMAEDDDDSFP). Residues 501–525 (YNKDLESAEERREREQQDLEFAKEM) show a composition bias toward basic and acidic residues.

The protein belongs to the proteasome subunit S3 family. Component of the 19S proteasome regulatory particle complex. The 26S proteasome consists of a 20S core particle (CP) and two 19S regulatory subunits (RP). The regulatory particle is made of a lid composed of 9 subunits including PSMD3, a base containing 6 ATPases and few additional components. Interacts with UBQLN1 (via ubiquitin-like domain). Interacts with ERCC6.

Functionally, component of the 26S proteasome, a multiprotein complex involved in the ATP-dependent degradation of ubiquitinated proteins. This complex plays a key role in the maintenance of protein homeostasis by removing misfolded or damaged proteins, which could impair cellular functions, and by removing proteins whose functions are no longer required. Therefore, the proteasome participates in numerous cellular processes, including cell cycle progression, apoptosis, or DNA damage repair. The protein is 26S proteasome non-ATPase regulatory subunit 3 (PSMD3) of Homo sapiens (Human).